The primary structure comprises 137 residues: Large ribosomal subunit protein uL16 (137 aa).

Residues 1-16 are compositionally biased toward basic residues; that stretch reads MLQPKRTKFRKMQKGR. The tract at residues 1–22 is disordered; it reads MLQPKRTKFRKMQKGRIRGEAK.

It belongs to the universal ribosomal protein uL16 family. As to quaternary structure, part of the 50S ribosomal subunit.

In terms of biological role, binds 23S rRNA and is also seen to make contacts with the A and possibly P site tRNAs. This Jannaschia sp. (strain CCS1) protein is Large ribosomal subunit protein uL16.